We begin with the raw amino-acid sequence, 192 residues long: Putative molybdenum cofactor guanylyltransferase (192 aa).

GTP contacts are provided by residues 8 to 10, Lys21, Asp67, and Asp101; that span reads LAG. Asp101 is a Mg(2+) binding site.

This sequence belongs to the MobA family. In terms of assembly, monomer. The cofactor is Mg(2+).

The protein localises to the cytoplasm. It catalyses the reaction Mo-molybdopterin + GTP + H(+) = Mo-molybdopterin guanine dinucleotide + diphosphate. Functionally, transfers a GMP moiety from GTP to Mo-molybdopterin (Mo-MPT) cofactor (Moco or molybdenum cofactor) to form Mo-molybdopterin guanine dinucleotide (Mo-MGD) cofactor. The polypeptide is Putative molybdenum cofactor guanylyltransferase (Neisseria meningitidis serogroup B (strain ATCC BAA-335 / MC58)).